Consider the following 365-residue polypeptide: UDP-N-acetylglucosamine--N-acetylmuramyl-(pentapeptide) pyrophosphoryl-undecaprenol N-acetylglucosamine transferase (365 aa).

UDP-N-acetyl-alpha-D-glucosamine-binding positions include 19–21 (TGG), asparagine 131, arginine 170, serine 201, isoleucine 255, 274–279 (ALTVTE), and glutamine 300.

The protein belongs to the glycosyltransferase 28 family. MurG subfamily.

It localises to the cell inner membrane. It catalyses the reaction di-trans,octa-cis-undecaprenyl diphospho-N-acetyl-alpha-D-muramoyl-L-alanyl-D-glutamyl-meso-2,6-diaminopimeloyl-D-alanyl-D-alanine + UDP-N-acetyl-alpha-D-glucosamine = di-trans,octa-cis-undecaprenyl diphospho-[N-acetyl-alpha-D-glucosaminyl-(1-&gt;4)]-N-acetyl-alpha-D-muramoyl-L-alanyl-D-glutamyl-meso-2,6-diaminopimeloyl-D-alanyl-D-alanine + UDP + H(+). It functions in the pathway cell wall biogenesis; peptidoglycan biosynthesis. Cell wall formation. Catalyzes the transfer of a GlcNAc subunit on undecaprenyl-pyrophosphoryl-MurNAc-pentapeptide (lipid intermediate I) to form undecaprenyl-pyrophosphoryl-MurNAc-(pentapeptide)GlcNAc (lipid intermediate II). In Acinetobacter baumannii (strain ATCC 17978 / DSM 105126 / CIP 53.77 / LMG 1025 / NCDC KC755 / 5377), this protein is UDP-N-acetylglucosamine--N-acetylmuramyl-(pentapeptide) pyrophosphoryl-undecaprenol N-acetylglucosamine transferase.